Consider the following 322-residue polypeptide: Phosphatidylserine decarboxylase proenzyme (322 aa).

Catalysis depends on charge relay system; for autoendoproteolytic cleavage activity residues Asp90, His147, and Ser254. Ser254 (schiff-base intermediate with substrate; via pyruvic acid; for decarboxylase activity) is an active-site residue. Ser254 carries the post-translational modification Pyruvic acid (Ser); by autocatalysis. Residues 297-322 form a disordered region; the sequence is PAPLPAEEIKAEHDASPLVDNKKDDT. Over residues 303–322 the composition is skewed to basic and acidic residues; that stretch reads EEIKAEHDASPLVDNKKDDT.

This sequence belongs to the phosphatidylserine decarboxylase family. PSD-B subfamily. Prokaryotic type I sub-subfamily. Heterodimer of a large membrane-associated beta subunit and a small pyruvoyl-containing alpha subunit. Pyruvate is required as a cofactor. Post-translationally, is synthesized initially as an inactive proenzyme. Formation of the active enzyme involves a self-maturation process in which the active site pyruvoyl group is generated from an internal serine residue via an autocatalytic post-translational modification. Two non-identical subunits are generated from the proenzyme in this reaction, and the pyruvate is formed at the N-terminus of the alpha chain, which is derived from the carboxyl end of the proenzyme. The autoendoproteolytic cleavage occurs by a canonical serine protease mechanism, in which the side chain hydroxyl group of the serine supplies its oxygen atom to form the C-terminus of the beta chain, while the remainder of the serine residue undergoes an oxidative deamination to produce ammonia and the pyruvoyl prosthetic group on the alpha chain. During this reaction, the Ser that is part of the protease active site of the proenzyme becomes the pyruvoyl prosthetic group, which constitutes an essential element of the active site of the mature decarboxylase.

It localises to the cell membrane. The enzyme catalyses a 1,2-diacyl-sn-glycero-3-phospho-L-serine + H(+) = a 1,2-diacyl-sn-glycero-3-phosphoethanolamine + CO2. Its pathway is phospholipid metabolism; phosphatidylethanolamine biosynthesis; phosphatidylethanolamine from CDP-diacylglycerol: step 2/2. Its function is as follows. Catalyzes the formation of phosphatidylethanolamine (PtdEtn) from phosphatidylserine (PtdSer). This Salmonella typhi protein is Phosphatidylserine decarboxylase proenzyme.